A 481-amino-acid chain; its full sequence is Glutamyl-tRNA(Gln) amidotransferase subunit A (481 aa).

Residues Lys-76 and Ser-151 each act as charge relay system in the active site. The active-site Acyl-ester intermediate is Ser-175.

Belongs to the amidase family. GatA subfamily. In terms of assembly, heterotrimer of A, B and C subunits.

It catalyses the reaction L-glutamyl-tRNA(Gln) + L-glutamine + ATP + H2O = L-glutaminyl-tRNA(Gln) + L-glutamate + ADP + phosphate + H(+). Functionally, allows the formation of correctly charged Gln-tRNA(Gln) through the transamidation of misacylated Glu-tRNA(Gln) in organisms which lack glutaminyl-tRNA synthetase. The reaction takes place in the presence of glutamine and ATP through an activated gamma-phospho-Glu-tRNA(Gln). This Neisseria meningitidis serogroup B (strain ATCC BAA-335 / MC58) protein is Glutamyl-tRNA(Gln) amidotransferase subunit A.